We begin with the raw amino-acid sequence, 408 residues long: tRNA-specific 2-thiouridylase MnmA (408 aa).

ATP-binding positions include 27-34 and leucine 53; that span reads AMSGGVDS. Cysteine 121 (nucleophile) is an active-site residue. An intrachain disulfide couples cysteine 121 to cysteine 222. Residue glycine 145 participates in ATP binding. The interval 172-174 is interaction with tRNA; that stretch reads RDQ. The active-site Cysteine persulfide intermediate is the cysteine 222.

Belongs to the MnmA/TRMU family.

It localises to the cytoplasm. It catalyses the reaction S-sulfanyl-L-cysteinyl-[protein] + uridine(34) in tRNA + AH2 + ATP = 2-thiouridine(34) in tRNA + L-cysteinyl-[protein] + A + AMP + diphosphate + H(+). In terms of biological role, catalyzes the 2-thiolation of uridine at the wobble position (U34) of tRNA, leading to the formation of s(2)U34. This Rhizobium etli (strain CIAT 652) protein is tRNA-specific 2-thiouridylase MnmA.